We begin with the raw amino-acid sequence, 294 residues long: Small ribosomal subunit biogenesis GTPase RsgA (294 aa).

A CP-type G domain is found at 63-223 (KNELLRPPIA…VADTPGFSSL (161 aa)). GTP-binding positions include 112–115 (SKID) and 166–174 (GQSGVGKSS). Zn(2+)-binding residues include Cys-247, Cys-252, His-254, and Cys-260.

It belongs to the TRAFAC class YlqF/YawG GTPase family. RsgA subfamily. As to quaternary structure, monomer. Associates with 30S ribosomal subunit, binds 16S rRNA. Requires Zn(2+) as cofactor.

The protein resides in the cytoplasm. In terms of biological role, one of several proteins that assist in the late maturation steps of the functional core of the 30S ribosomal subunit. Helps release RbfA from mature subunits. May play a role in the assembly of ribosomal proteins into the subunit. Circularly permuted GTPase that catalyzes slow GTP hydrolysis, GTPase activity is stimulated by the 30S ribosomal subunit. The chain is Small ribosomal subunit biogenesis GTPase RsgA from Halalkalibacterium halodurans (strain ATCC BAA-125 / DSM 18197 / FERM 7344 / JCM 9153 / C-125) (Bacillus halodurans).